A 217-amino-acid polypeptide reads, in one-letter code: MOB kinase activator 3A (217 aa).

4 residues coordinate Zn(2+): C83, C88, H165, and H170.

It belongs to the MOB1/phocein family.

May regulate the activity of kinases. The polypeptide is MOB kinase activator 3A (MOB3A) (Bos taurus (Bovine)).